The primary structure comprises 281 residues: Mad-like protein 1 (281 aa).

Residues 71 to 80 (SCASNASTSS) show a composition bias toward low complexity. The interval 71–105 (SCASNASTSSQPYCSSPPARKSSKHSRTAHNELEK) is disordered. The interval 95 to 108 (HSRTAHNELEKTRR) is basic motif. Residues 95–147 (HSRTAHNELEKTRRANLRGCLETLKMLVPCVSDATRNTTLALLTRARDHIIEL) form the bHLH domain. The interval 109-147 (ANLRGCLETLKMLVPCVSDATRNTTLALLTRARDHIIEL) is helix-loop-helix motif. A coiled-coil region spans residues 144-185 (IIELQDSNAAQMKKLNDLRDEQDELVAELAQLQADEEVAQAT). The tract at residues 189 to 213 (CQTLSQSRPESRASSFTSTSSRDSP) is disordered. Positions 200–212 (RASSFTSTSSRDS) are enriched in low complexity.

Forms heterodimer with mxl-1 in the presence and absence of DNA. Post-translationally, ubiquitinated. In terms of tissue distribution, expressed in intestinal cells in adults. Expressed in D-type motor neuron cell bodies.

The protein resides in the nucleus. Its function is as follows. Transcriptional regulator which binds to the E box motif 5'-CACGTG-3', when in a heterodimeric complex with mxl-1. Involved in the control of lifespan in response to dietary restriction, the decline in protein homeostasis associated with normal aging, germline signaling and may overlap with the insulin-like signaling pathway. Plays a role in autophagy. Involved in promoting infection by the microsporidian pathogen N.parisii, possibly together with transcription factors pha-4 and zip-10. In response to neuronal injury, mdl-1 is targeted by sdz-33 for ubiquitin-mediated degradation, probably thereby reducing levels of mdl-1-mxl-1 heterodimers, allowing free mxl-1 to form complexes with tdpt-1 and thus inhibiting tdpt-1-dependent sumoylation of ets-4. The polypeptide is Mad-like protein 1 (Caenorhabditis elegans).